Here is a 233-residue protein sequence, read N- to C-terminus: Biosynthetic peptidoglycan transglycosylase (233 aa).

The chain crosses the membrane as a helical span at residues 8-28 (LIALPVGIFIFFNAYVYGNII).

The protein belongs to the glycosyltransferase 51 family.

It is found in the cell inner membrane. It carries out the reaction [GlcNAc-(1-&gt;4)-Mur2Ac(oyl-L-Ala-gamma-D-Glu-L-Lys-D-Ala-D-Ala)](n)-di-trans,octa-cis-undecaprenyl diphosphate + beta-D-GlcNAc-(1-&gt;4)-Mur2Ac(oyl-L-Ala-gamma-D-Glu-L-Lys-D-Ala-D-Ala)-di-trans,octa-cis-undecaprenyl diphosphate = [GlcNAc-(1-&gt;4)-Mur2Ac(oyl-L-Ala-gamma-D-Glu-L-Lys-D-Ala-D-Ala)](n+1)-di-trans,octa-cis-undecaprenyl diphosphate + di-trans,octa-cis-undecaprenyl diphosphate + H(+). Its pathway is cell wall biogenesis; peptidoglycan biosynthesis. Peptidoglycan polymerase that catalyzes glycan chain elongation from lipid-linked precursors. In Neisseria meningitidis serogroup C (strain 053442), this protein is Biosynthetic peptidoglycan transglycosylase.